A 221-amino-acid polypeptide reads, in one-letter code: N-(5'-phosphoribosyl)anthranilate isomerase (221 aa).

Belongs to the TrpF family.

The catalysed reaction is N-(5-phospho-beta-D-ribosyl)anthranilate = 1-(2-carboxyphenylamino)-1-deoxy-D-ribulose 5-phosphate. It participates in amino-acid biosynthesis; L-tryptophan biosynthesis; L-tryptophan from chorismate: step 3/5. The polypeptide is N-(5'-phosphoribosyl)anthranilate isomerase (Parabacteroides distasonis (strain ATCC 8503 / DSM 20701 / CIP 104284 / JCM 5825 / NCTC 11152)).